A 410-amino-acid chain; its full sequence is MKEELLKRFTKYVKVDTQSNEESKACPTTPGQMELANILVTELKEIGMQEVTVDEFGYVMATLPSNTTKEVPVIGFLAHLDTATDLTGKNVQPQVHENYDGKDIVLNKDLNVVLSPKQFPELADYNGKTLITTDGTTLLGADDKAGITEIMVAMNYLINHPEIKHGKIRVAFTPDEEIGRGPERFDVEAFGAKYAYTMDGGPLGELEYESFNAAGAKITFNGNSVHPGTAKNKMVNAVKMAMEFNAHIPKDEAPEYTEGYEGFYHLISLNGDVEQAKAYYIIRDFDHLKFVERKTHIASIAKELEEKYGEGSVELKLNDQYYNMREKIEPVKEIVDIVSAAMRNLDIEPKISPIRGGTDGAQLSYKGLPTPNIFGGGENFHGKFEYVALESMVKATEVIIEVARLFEEKE.

Residue histidine 79 coordinates Zn(2+). Aspartate 81 is an active-site residue. Residue aspartate 142 participates in Zn(2+) binding. Residue glutamate 176 is the Proton acceptor of the active site. Positions 177, 199, and 381 each coordinate Zn(2+).

The protein belongs to the peptidase M20B family. Zn(2+) serves as cofactor.

The protein localises to the cytoplasm. The catalysed reaction is Release of the N-terminal residue from a tripeptide.. Its function is as follows. Cleaves the N-terminal amino acid of tripeptides. The sequence is that of Peptidase T from Listeria monocytogenes serotype 4b (strain F2365).